Here is a 134-residue protein sequence, read N- to C-terminus: MAKAVALLLAAIAASAVLVQVECDAAVEKSFNKALLAPVDKRLDEAAQAINEAADSVVAAAPPAKKDEVEAATWKRRMFAITALGMAQGDEKKVAATSLAYKKAAKAVLDAAPADKFKLMDESFKVAVMQVIAS.

The signal sequence occupies residues Met-1 to Ala-16.

This is an uncharacterized protein from Oryza sativa subsp. indica (Rice).